Consider the following 306-residue polypeptide: Pantothenate kinase (306 aa).

91–98 (GSVAVGKS) is a binding site for ATP.

This sequence belongs to the prokaryotic pantothenate kinase family.

The protein localises to the cytoplasm. It carries out the reaction (R)-pantothenate + ATP = (R)-4'-phosphopantothenate + ADP + H(+). Its pathway is cofactor biosynthesis; coenzyme A biosynthesis; CoA from (R)-pantothenate: step 1/5. In Streptococcus pyogenes serotype M1, this protein is Pantothenate kinase (coaA).